The chain runs to 100 residues: MACSTLPKSPKDKIDPRDLLIPLILFLSLKGARSAAPGSSPHQVYNITWEVTNGDRETVWAISGRLYVSGRDPGLTFGIRLRYQNLGPRVPIGPNPVLAD.

The N-terminal stretch at 1–34 (MACSTLPKSPKDKIDPRDLLIPLILFLSLKGARS) is a signal peptide. An N-linked (GlcNAc...) asparagine; by host glycan is attached at Asn-46.

The protein resides in the virion membrane. In Myeloproliferative leukemia virus (MpLV), this protein is Envelope glycoprotein (env).